Reading from the N-terminus, the 367-residue chain is Developmentally-regulated GTP-binding protein 1 (367 aa).

A required for interaction with STK16 region spans residues 2-16 (SGTLARIAEIEAEMA). Positions 65 to 290 (ARIGFVGFPS…LLEKIWDYLQ (226 aa)) constitute an OBG-type G domain. GTP is bound by residues 71-78 (GFPSVGKS), 96-100 (FTTLT), 117-120 (DLPG), 248-251 (NKID), and 271-273 (SAH). Mg(2+) is bound by residues Ser78 and Thr98. The 77-residue stretch at 290 to 366 (QLVRIYTKPK…EDEDVIQIVK (77 aa)) folds into the TGS domain.

Belongs to the TRAFAC class OBG-HflX-like GTPase superfamily. OBG GTPase family. Mg(2+) serves as cofactor. K(+) is required as a cofactor. In terms of tissue distribution, expressed in many adult amd embryonic tissues. In adults, highest levels in ovaries and testes, followed by skeletal muscle, stomach, brain, kidney and liver. Weak expression in heart and brain.

It is found in the nucleus. It localises to the cytoplasm. It catalyses the reaction GTP + H2O = GDP + phosphate + H(+). Catalyzes the conversion of GTP to GDP through hydrolysis of the gamma-phosphate bond in GTP. Binds to microtubules and promotes microtubule polymerization and bundling. GTPase activity is not necessary for these microtubule-related functions. The polypeptide is Developmentally-regulated GTP-binding protein 1 (drg1) (Xenopus laevis (African clawed frog)).